The following is a 201-amino-acid chain: FMN-dependent NADH:quinone oxidoreductase (201 aa).

Residues Ser-9 and Ser-16–Ser-18 contribute to the FMN site.

The protein belongs to the azoreductase type 1 family. In terms of assembly, homodimer. It depends on FMN as a cofactor.

The catalysed reaction is 2 a quinone + NADH + H(+) = 2 a 1,4-benzosemiquinone + NAD(+). It catalyses the reaction N,N-dimethyl-1,4-phenylenediamine + anthranilate + 2 NAD(+) = 2-(4-dimethylaminophenyl)diazenylbenzoate + 2 NADH + 2 H(+). Quinone reductase that provides resistance to thiol-specific stress caused by electrophilic quinones. Its function is as follows. Also exhibits azoreductase activity. Catalyzes the reductive cleavage of the azo bond in aromatic azo compounds to the corresponding amines. This Mesomycoplasma hyopneumoniae (strain J / ATCC 25934 / NCTC 10110) (Mycoplasma hyopneumoniae) protein is FMN-dependent NADH:quinone oxidoreductase.